The primary structure comprises 344 residues: Biotin synthase (344 aa).

The Radical SAM core domain occupies 40–267 (AEVQVSTLLS…KSMVRLSAGR (228 aa)). [4Fe-4S] cluster is bound by residues Cys55, Cys59, and Cys62. [2Fe-2S] cluster contacts are provided by Cys99, Cys130, Cys190, and Arg262.

The protein belongs to the radical SAM superfamily. Biotin synthase family. As to quaternary structure, homodimer. [4Fe-4S] cluster serves as cofactor. The cofactor is [2Fe-2S] cluster.

The catalysed reaction is (4R,5S)-dethiobiotin + (sulfur carrier)-SH + 2 reduced [2Fe-2S]-[ferredoxin] + 2 S-adenosyl-L-methionine = (sulfur carrier)-H + biotin + 2 5'-deoxyadenosine + 2 L-methionine + 2 oxidized [2Fe-2S]-[ferredoxin]. It functions in the pathway cofactor biosynthesis; biotin biosynthesis; biotin from 7,8-diaminononanoate: step 2/2. Catalyzes the conversion of dethiobiotin (DTB) to biotin by the insertion of a sulfur atom into dethiobiotin via a radical-based mechanism. The protein is Biotin synthase of Xanthomonas oryzae pv. oryzae (strain PXO99A).